Reading from the N-terminus, the 275-residue chain is Large ribosomal subunit protein uL2 (275 aa).

The segment at 224–275 (AMNPVDHPHGGGEAKAGQGNPHPVTPWGVPTKGYKTRKNKRTQQFIVRDRRG) is disordered.

The protein belongs to the universal ribosomal protein uL2 family. In terms of assembly, part of the 50S ribosomal subunit. Forms a bridge to the 30S subunit in the 70S ribosome.

One of the primary rRNA binding proteins. Required for association of the 30S and 50S subunits to form the 70S ribosome, for tRNA binding and peptide bond formation. It has been suggested to have peptidyltransferase activity; this is somewhat controversial. Makes several contacts with the 16S rRNA in the 70S ribosome. This is Large ribosomal subunit protein uL2 from Xanthomonas axonopodis pv. citri (strain 306).